Here is a 534-residue protein sequence, read N- to C-terminus: MFKRSLKVLLSNPPINRVKPSSTIIQPLSNTTTTTIINNNNITNFEKMTHKKSMTIDNICQNVRNAQYAVRGELVIRAEAISHQLQKQKTEGTKTLPFEEIVYCNIGNPQQLKQKPLTYFRQVVSLVECPDLLDNPYVEKIYPADVISRAKEILGSINNTTGAYSNSQGIGLVLRSVADFIERRDGHKSDPSEIFLTDGASVGVQRILKLLIKDRSDGILIPIPQYPLYSATIELYNGSQLGYLLNEEKGWSLEISQLEHSYNDAVSKGINPRALVIINPGNPTGQCLDRANMEEIVKFCLEKNVVLLADEVYQENVYVKESKPFISFKKVVKDMGGDYADLEMVSFHSVSKGFVGECGKRGGYMELNGVTQDVKAEIYKLASIGLCPNVIGQLVVDLMVRPPVAGEQSHDLYLKERDNIYESLKKRANLLTNALNNLEGVTCNPSEGAMYAFPQIRLPAKAVEYANSIGKAPDAYYCIQLLEATGICVVPGSGFGQKDGTWHFRTTFLPSEEAIEGVCKRIADFHQSFMNKYK.

A mitochondrion-targeting transit peptide spans 1 to 18 (MFKRSLKVLLSNPPINRV). Lys352 bears the N6-(pyridoxal phosphate)lysine mark.

This sequence belongs to the class-I pyridoxal-phosphate-dependent aminotransferase family. Alanine aminotransferase subfamily. In terms of assembly, homodimer. Pyridoxal 5'-phosphate serves as cofactor.

It localises to the mitochondrion matrix. It carries out the reaction L-alanine + 2-oxoglutarate = pyruvate + L-glutamate. The protein operates within amino-acid degradation; L-alanine degradation via transaminase pathway; pyruvate from L-alanine: step 1/1. The polypeptide is Probable alanine aminotransferase, mitochondrial (gpt) (Dictyostelium discoideum (Social amoeba)).